A 1087-amino-acid polypeptide reads, in one-letter code: Error-prone DNA polymerase 2 (1087 aa).

Residues 1033 to 1064 form a disordered region; that stretch reads DGAFRPPTGRGDEFAHGSPGSADSRGKAPPGV.

Belongs to the DNA polymerase type-C family. DnaE2 subfamily.

It is found in the cytoplasm. It carries out the reaction DNA(n) + a 2'-deoxyribonucleoside 5'-triphosphate = DNA(n+1) + diphosphate. In terms of biological role, DNA polymerase involved in damage-induced mutagenesis and translesion synthesis (TLS). It is not the major replicative DNA polymerase. This Rhizobium meliloti (strain 1021) (Ensifer meliloti) protein is Error-prone DNA polymerase 2.